A 732-amino-acid polypeptide reads, in one-letter code: Elongation factor 2 (732 aa).

Residues 19–230 (ERIRNMGIAA…VSFKDIIDLT (212 aa)) form the tr-type G domain. GTP-binding positions include 28-35 (AHIDHGKT), 94-98 (DTPGH), and 148-151 (NKVD). His597 is modified (diphthamide).

The protein belongs to the TRAFAC class translation factor GTPase superfamily. Classic translation factor GTPase family. EF-G/EF-2 subfamily.

It localises to the cytoplasm. Catalyzes the GTP-dependent ribosomal translocation step during translation elongation. During this step, the ribosome changes from the pre-translocational (PRE) to the post-translocational (POST) state as the newly formed A-site-bound peptidyl-tRNA and P-site-bound deacylated tRNA move to the P and E sites, respectively. Catalyzes the coordinated movement of the two tRNA molecules, the mRNA and conformational changes in the ribosome. This Thermococcus sibiricus (strain DSM 12597 / MM 739) protein is Elongation factor 2.